We begin with the raw amino-acid sequence, 323 residues long: tRNA dimethylallyltransferase (323 aa).

Residue 12-19 (GPTAAGKT) coordinates ATP. A substrate-binding site is contributed by 14-19 (TAAGKT). Interaction with substrate tRNA regions lie at residues 37 to 40 (DSAL) and 161 to 165 (QRLSR).

The protein belongs to the IPP transferase family. As to quaternary structure, monomer. Requires Mg(2+) as cofactor.

It catalyses the reaction adenosine(37) in tRNA + dimethylallyl diphosphate = N(6)-dimethylallyladenosine(37) in tRNA + diphosphate. In terms of biological role, catalyzes the transfer of a dimethylallyl group onto the adenine at position 37 in tRNAs that read codons beginning with uridine, leading to the formation of N6-(dimethylallyl)adenosine (i(6)A). This chain is tRNA dimethylallyltransferase, found in Pseudomonas fluorescens (strain SBW25).